Reading from the N-terminus, the 142-residue chain is Cystatin-8 (142 aa).

A signal peptide spans 1-21 (MPRCRWLSLILLTIPLALVAR). Asn-27 and Asn-39 each carry an N-linked (GlcNAc...) asparagine glycan. Residues 77-81 (QVTNL) carry the Secondary area of contact motif. Cystine bridges form between Cys-95/Cys-105 and Cys-119/Cys-139.

Belongs to the cystatin family. In terms of tissue distribution, proximal caput region of the epididymis. Lower expression in the testis. Within the testis it is localized to the elongating spermatids, whereas within the epididymis it is exclusively synthesized by the proximal caput epithelium.

It is found in the secreted. Functionally, performs a specialized role during sperm development and maturation. This Homo sapiens (Human) protein is Cystatin-8 (CST8).